The primary structure comprises 211 residues: Thiamine-phosphate synthase (211 aa).

4-amino-2-methyl-5-(diphosphooxymethyl)pyrimidine-binding positions include 39-41 (QLR) and N71. The Mg(2+) site is built by D72 and D91. 4-amino-2-methyl-5-(diphosphooxymethyl)pyrimidine is bound at residue S110. 2-[(2R,5Z)-2-carboxy-4-methylthiazol-5(2H)-ylidene]ethyl phosphate is bound at residue 136–138 (TGT). K139 contributes to the 4-amino-2-methyl-5-(diphosphooxymethyl)pyrimidine binding site. 2-[(2R,5Z)-2-carboxy-4-methylthiazol-5(2H)-ylidene]ethyl phosphate-binding positions include G167 and 187 to 188 (VS).

It belongs to the thiamine-phosphate synthase family. It depends on Mg(2+) as a cofactor.

It carries out the reaction 2-[(2R,5Z)-2-carboxy-4-methylthiazol-5(2H)-ylidene]ethyl phosphate + 4-amino-2-methyl-5-(diphosphooxymethyl)pyrimidine + 2 H(+) = thiamine phosphate + CO2 + diphosphate. The catalysed reaction is 2-(2-carboxy-4-methylthiazol-5-yl)ethyl phosphate + 4-amino-2-methyl-5-(diphosphooxymethyl)pyrimidine + 2 H(+) = thiamine phosphate + CO2 + diphosphate. It catalyses the reaction 4-methyl-5-(2-phosphooxyethyl)-thiazole + 4-amino-2-methyl-5-(diphosphooxymethyl)pyrimidine + H(+) = thiamine phosphate + diphosphate. The protein operates within cofactor biosynthesis; thiamine diphosphate biosynthesis; thiamine phosphate from 4-amino-2-methyl-5-diphosphomethylpyrimidine and 4-methyl-5-(2-phosphoethyl)-thiazole: step 1/1. Its function is as follows. Condenses 4-methyl-5-(beta-hydroxyethyl)thiazole monophosphate (THZ-P) and 2-methyl-4-amino-5-hydroxymethyl pyrimidine pyrophosphate (HMP-PP) to form thiamine monophosphate (TMP). This Xanthobacter autotrophicus (strain ATCC BAA-1158 / Py2) protein is Thiamine-phosphate synthase.